The sequence spans 611 residues: Zinc metalloproteinase nas-31 (611 aa).

Residues 1 to 17 form the signal peptide; sequence MILQLLFYSLFTHLAVS. Positions 18–158 are excised as a propeptide; that stretch reads QIDVNQALNQ…TVSTASRARR (141 aa). N-linked (GlcNAc...) asparagine glycosylation is found at Asn53 and Asn67. Polar residues predominate over residues 82 to 95; sequence NAGTNQENGATEQQ. Residues 82–103 are disordered; that stretch reads NAGTNQENGATEQQKPLREKPR. In terms of domain architecture, Peptidase M12A spans 159-354; the sequence is QAYRDRYYPS…SMMNEHYKCK (196 aa). N-linked (GlcNAc...) asparagine glycosylation is present at Asn200. 9 disulfide bridges follow: Cys203-Cys353, Cys224-Cys243, Cys357-Cys376, Cys379-Cys390, Cys397-Cys428, Cys455-Cys476, Cys532-Cys564, Cys539-Cys557, and Cys548-Cys561. His251 is a binding site for Zn(2+). The active site involves Glu252. Zn(2+) is bound by residues His255 and His261. One can recognise an EGF-like domain in the interval 340–396; that stretch reads GFYDISMMNEHYKCKELCPAASSAQCKNGGFPSPRNCAICICPSGYGGILCDQRPPG. In terms of domain architecture, CUB spans 397–516; that stretch reads CGDSVTATTT…LEYRAVTPSV (120 aa). A glycan (N-linked (GlcNAc...) asparagine) is linked at Asn424. One can recognise a ShKT domain in the interval 532–564; it reads CQDLHPNCDFYKFFGMCRSKKIRSNCKFTCHDC.

Requires Zn(2+) as cofactor. Expressed in excretory cell and in amphid and phasmid sheath glia.

It localises to the secreted. Its function is as follows. Metalloprotease. This is Zinc metalloproteinase nas-31 (nas-31) from Caenorhabditis elegans.